The sequence spans 320 residues: ATP-dependent 6-phosphofructokinase (320 aa).

Gly12 is an ATP binding site. Position 22–26 (22–26 (RGVVR)) interacts with ADP. ATP contacts are provided by residues 73-74 (RF) and 103-106 (GDGS). Asp104 is a binding site for Mg(2+). 126–128 (TID) is a substrate binding site. The Proton acceptor role is filled by Asp128. Residue Arg155 coordinates ADP. Substrate contacts are provided by residues Arg163 and 170-172 (MGR). ADP is bound by residues 186 to 188 (GCE), Lys212, and 214 to 216 (KKH). Substrate-binding positions include Glu223, Arg244, and 250–253 (HIQR).

This sequence belongs to the phosphofructokinase type A (PFKA) family. ATP-dependent PFK group I subfamily. Prokaryotic clade 'B1' sub-subfamily. In terms of assembly, homotetramer. The cofactor is Mg(2+).

It localises to the cytoplasm. It catalyses the reaction beta-D-fructose 6-phosphate + ATP = beta-D-fructose 1,6-bisphosphate + ADP + H(+). It participates in carbohydrate degradation; glycolysis; D-glyceraldehyde 3-phosphate and glycerone phosphate from D-glucose: step 3/4. Allosterically activated by ADP and other diphosphonucleosides, and allosterically inhibited by phosphoenolpyruvate. Catalyzes the phosphorylation of D-fructose 6-phosphate to fructose 1,6-bisphosphate by ATP, the first committing step of glycolysis. The protein is ATP-dependent 6-phosphofructokinase of Vibrio parahaemolyticus serotype O3:K6 (strain RIMD 2210633).